The primary structure comprises 121 residues: Darcynin homolog (121 aa).

Belongs to the darcynin family.

The protein is Darcynin homolog of Streptomyces avermitilis (strain ATCC 31267 / DSM 46492 / JCM 5070 / NBRC 14893 / NCIMB 12804 / NRRL 8165 / MA-4680).